A 247-amino-acid chain; its full sequence is Protein NipSnap homolog 3A (247 aa).

N6-acetyllysine occurs at positions 48 and 166.

This sequence belongs to the NipSnap family. In terms of assembly, interacts with the Salmonella typhimurium virulence protein spiC. Ubiquitous. Highly expressed in liver, kidney and muscle. Expressed at intermediate level in brain, heart, colon, thymus, kidney, small intestine, placenta, lung, leukocytes and spleen.

The protein localises to the cytoplasm. It localises to the cytosol. The polypeptide is Protein NipSnap homolog 3A (NIPSNAP3A) (Homo sapiens (Human)).